Consider the following 83-residue polypeptide: Small ribosomal subunit protein eS21 (83 aa).

Belongs to the eukaryotic ribosomal protein eS21 family. Component of the 40S small ribosomal subunit. Interacts with sta.

It localises to the cytoplasm. Its subcellular location is the cytosol. The protein localises to the rough endoplasmic reticulum. Functionally, may be an associated component of the ribosome rather than a core structural subunit. May act as a translation initiation factor. Has a role in regulation of cell proliferation in the hematopoietic organs and the imaginal disks of larva. The chain is Small ribosomal subunit protein eS21 (RpS21) from Drosophila simulans (Fruit fly).